A 570-amino-acid polypeptide reads, in one-letter code: Multidrug and toxin extrusion protein 1 (570 aa).

N-acetylmethionine is present on methionine 1. At 1–37 (MEAPEEPAPVRGGPEATLEIHGSRFLRLSAFREELRA) the chain is on the cytoplasmic side. The chain crosses the membrane as a helical span at residues 38 to 58 (LLVLAGPAFLVQLMVFLISFI). Over 59-72 (SSVFCGHLGKLELD) the chain is Extracellular. A helical membrane pass occupies residues 73 to 93 (AVTLAIAVINVTGVSVGFGLS). Over 94 to 120 (SACDTLISQTYGSQNLKHVGVILQRSA) the chain is Cytoplasmic. The chain crosses the membrane as a helical span at residues 121 to 141 (LILLLCCFPCWALFLNTQHIL). The Extracellular portion of the chain corresponds to 142–152 (LLFRQDPDVSR). A helical transmembrane segment spans residues 153 to 173 (LTQTYVTIFIPALPATFLYML). Residues 174–176 (QVK) lie on the Cytoplasmic side of the membrane. The helical transmembrane segment at 177 to 197 (YLLNQGIVLPQIVTGVAANLV) threads the bilayer. Residues 198–216 (NALANYLFLHQLHLGAIGS) lie on the Extracellular side of the membrane. A helical membrane pass occupies residues 217–237 (ALANLISQYTLALLLFFYILG). At 238–251 (KKLHQATWGGWSLE) the chain is on the cytoplasmic side. A helical membrane pass occupies residues 252–272 (CLQDWASFLHLAVPSMLMLCM). Over 273–295 (EWWAYEVGSFLSGILGMVELGAQ) the chain is Extracellular. Residues 296–316 (SIVYELAIIVYMVPAGFSVAA) form a helical membrane-spanning segment. The Cytoplasmic segment spans residues 317–336 (SVRVGNALGAGDMEQARKSS). Residues 337–357 (TVSLLITVLFAVAFSVLLLSC) form a helical membrane-spanning segment. At 358 to 370 (KDHVGYIFTTDRD) the chain is on the extracellular side. The chain crosses the membrane as a helical span at residues 371 to 391 (IINLVAQVVPIYAVSHLFEAL). Residues 392–408 (ACTSGGVLRGSGNQKVG) are Cytoplasmic-facing. The helical transmembrane segment at 409 to 429 (AIVNTIGYYVVGLPIGIALMF) threads the bilayer. The Extracellular segment spans residues 430–437 (ATKLGVMG). The helical transmembrane segment at 438–458 (LWSGIIICTVFQAVCFLGFII) threads the bilayer. The Cytoplasmic segment spans residues 459-546 (QLNWKKACQQ…LSRKQLVLRR (88 aa)). The interval 508–534 (DVGKTGETQSDQQMRQEEPLPEHPQDS) is disordered. Positions 521-533 (MRQEEPLPEHPQD) are enriched in basic and acidic residues. The helical transmembrane segment at 547–567 (GLLLLGVFLILLVGILVRFYV) threads the bilayer. Topologically, residues 568 to 570 (RIQ) are extracellular.

This sequence belongs to the multi antimicrobial extrusion (MATE) (TC 2.A.66.1) family.

It is found in the cell membrane. Its subcellular location is the apical cell membrane. The catalysed reaction is thiamine(out) + H(+)(in) = thiamine(in) + H(+)(out). It catalyses the reaction estrone 3-sulfate(in) + H(+)(out) = estrone 3-sulfate(out) + H(+)(in). It carries out the reaction creatinine(in) + H(+)(out) = creatinine(out) + H(+)(in). The enzyme catalyses agmatine(in) + H(+)(out) = agmatine(out) + H(+)(in). Multidrug efflux pump that functions as a H(+)/organic cation antiporter. Plays a physiological role in the excretion of cationic compounds including endogenous metabolites, drugs, toxins through the kidney and liver, into urine and bile respectively. Mediates the efflux of endogenous compounds such as creatinine, vitamin B1/thiamine, agmatine and estrone-3-sulfate. May also contribute to regulate the transport of cationic compounds in testis across the blood-testis-barrier. This chain is Multidrug and toxin extrusion protein 1 (SLC47A1), found in Pongo abelii (Sumatran orangutan).